A 798-amino-acid polypeptide reads, in one-letter code: Protocadherin beta-10 (798 aa).

The N-terminal stretch at 1 to 26 (MAVRELCFSRQRQVLFLFLFWGVSLA) is a signal peptide. At 27 to 690 (GSGFGRYSVT…AQADLLTVYL (664 aa)) the chain is on the extracellular side. 5 Cadherin domains span residues 35–133 (VTEE…APVF), 138–242 (TVLK…APQF), 247–347 (YETQ…PPEL), 352–451 (FSNS…APAF), and 456–561 (YTLF…SPFV). Residue N169 is glycosylated (N-linked (GlcNAc...) asparagine). 2 N-linked (GlcNAc...) asparagine glycosylation sites follow: N418 and N436. N567 carries an N-linked (GlcNAc...) asparagine glycan. One can recognise a Cadherin 6 domain in the interval 568–671 (GSAPCTELVP…LVDGFSQPYL (104 aa)). Residues 691 to 711 (VVALASVSSLFLFSVLLFVAV) traverse the membrane as a helical segment. At 712-798 (RLCRRSRAAS…FRNSFGFNIQ (87 aa)) the chain is on the cytoplasmic side.

It localises to the cell membrane. Functionally, potential calcium-dependent cell-adhesion protein. May be involved in the establishment and maintenance of specific neuronal connections in the brain. In Pan troglodytes (Chimpanzee), this protein is Protocadherin beta-10 (PCDHB10).